We begin with the raw amino-acid sequence, 101 residues long: Small ribosomal subunit protein uS14 (101 aa).

This sequence belongs to the universal ribosomal protein uS14 family. Part of the 30S ribosomal subunit. Contacts proteins S3 and S10.

In terms of biological role, binds 16S rRNA, required for the assembly of 30S particles and may also be responsible for determining the conformation of the 16S rRNA at the A site. The polypeptide is Small ribosomal subunit protein uS14 (Neisseria meningitidis serogroup C / serotype 2a (strain ATCC 700532 / DSM 15464 / FAM18)).